A 312-amino-acid chain; its full sequence is Putative olfactory receptor 1F2 (312 aa).

Residues 1–25 (MERDKPVSVSEFLLLGLSRQPQQQH) lie on the Extracellular side of the membrane. A helical transmembrane segment spans residues 26–49 (LLFVFFLSMYLATVLGNLLIILAI). Residues 50–57 (SIDSRLHT) lie on the Cytoplasmic side of the membrane. A helical transmembrane segment spans residues 58–78 (PMYFFLSNMSFVDNCFSTTVP). Residues 79-99 (KMLANHILRTQTISFSGCLMQ) are Extracellular-facing. Residues Cys-96 and Cys-188 are joined by a disulfide bond. The helical transmembrane segment at 100–119 (MYFISELADMDNFLLAVMAY) threads the bilayer. The Cytoplasmic portion of the chain corresponds to 120–138 (DRFVAVCRPLHYTAKMIHQ). Residues 139-157 (LCALLVTGSWVVANSNALL) form a helical membrane-spanning segment. Residues 158–195 (HTLLMARLSFCADNTIPHIFCDVTPLLKLSCSDTHLSE) lie on the Extracellular side of the membrane. The chain crosses the membrane as a helical span at residues 196–218 (VMILTEAALVTITPFLCLLASYM). The Cytoplasmic portion of the chain corresponds to 219-235 (HITCVVLRVPSTKGRWK). A helical transmembrane segment spans residues 236–258 (AFSTCGSHLAVVLLFYGTIMSPY). The Extracellular segment spans residues 259–271 (FRTSSSHSAQRDI). A helical transmembrane segment spans residues 272 to 291 (AAAVRFTVVTPVMNPLIYSL). The Cytoplasmic segment spans residues 292–312 (RNKDIKGALVKVVAVKFFSVQ).

It belongs to the G-protein coupled receptor 1 family.

It is found in the cell membrane. Odorant receptor. This is Putative olfactory receptor 1F2 (OR1F2P) from Homo sapiens (Human).